Consider the following 77-residue polypeptide: Ubiquitin-like protein NEDD8 (77 aa).

The interaction with uba-3 stretch occupies residues 70–72 (VLA). Residue Gly76 forms a Glycyl lysine isopeptide (Gly-Lys) (interchain with K-? in acceptor proteins) linkage. A propeptide is located at residue Phe77.

Belongs to the ubiquitin family. In terms of assembly, interacts with dcn-1. Covalently attached to cullins. May interact with atx-3. Cleavage of precursor form is necessary for function.

Its subcellular location is the nucleus. The protein localises to the cytoplasm. Functionally, ubiquitin-like protein which plays an important role in cell cycle control and embryogenesis. Covalent attachment to its substrates requires prior activation by the E1 complex uba-3-ula-1 and linkage to the E2 enzyme ubc-12. Attachment of ned-8 to cullins activates their associated E3 ubiquitin ligase activity, and thus promotes polyubiquitination and proteasomal degradation of cyclins and other regulatory proteins. The protein is Ubiquitin-like protein NEDD8 (ned-8) of Caenorhabditis elegans.